We begin with the raw amino-acid sequence, 692 residues long: NAD(P)H-quinone oxidoreductase subunit 5, chloroplastic (692 aa).

17 helical membrane passes run 9–29, 39–59, 89–109, 120–140, 147–167, 184–204, 219–239, 258–278, 289–309, 327–347, 354–374, 395–415, 425–445, 503–523, 555–575, 643–663, and 671–691; these read WFVP…LFFF, LSSF…FHFF, LDPL…MVMI, GYIK…GLVL, VYIF…FWFT, IGDF…GSFD, NQIN…GPVA, TPIS…FLVA, FVMS…ATIA, LGYM…FHLI, ALLF…VGYH, AITF…ACFW, WLHF…TAFY, LFPL…GILF, FLFN…IAFY, WIID…GESL, and ISSY…YSYI.

The protein belongs to the complex I subunit 5 family. As to quaternary structure, NDH is composed of at least 16 different subunits, 5 of which are encoded in the nucleus.

The protein resides in the plastid. It localises to the chloroplast thylakoid membrane. The catalysed reaction is a plastoquinone + NADH + (n+1) H(+)(in) = a plastoquinol + NAD(+) + n H(+)(out). It carries out the reaction a plastoquinone + NADPH + (n+1) H(+)(in) = a plastoquinol + NADP(+) + n H(+)(out). In terms of biological role, NDH shuttles electrons from NAD(P)H:plastoquinone, via FMN and iron-sulfur (Fe-S) centers, to quinones in the photosynthetic chain and possibly in a chloroplast respiratory chain. The immediate electron acceptor for the enzyme in this species is believed to be plastoquinone. Couples the redox reaction to proton translocation, and thus conserves the redox energy in a proton gradient. The chain is NAD(P)H-quinone oxidoreductase subunit 5, chloroplastic (ndhF) from Marchantia polymorpha (Common liverwort).